We begin with the raw amino-acid sequence, 487 residues long: Histamine H1 receptor (487 aa).

Residues 1–29 (MSLPNSSCLLEDKMCEGNKTTMASPQLMP) lie on the Extracellular side of the membrane. Residues Asn-5 and Asn-18 are each glycosylated (N-linked (GlcNAc...) asparagine). A helical membrane pass occupies residues 30 to 50 (LVVVLSTICLVTVGLNLLVLY). Residues 51–64 (AVRSERKLHTVGNL) lie on the Cytoplasmic side of the membrane. A helical membrane pass occupies residues 65–89 (YIVSLSVADLIVGAVVMPMNILYLL). Residues 90 to 97 (MSKWSLGR) are Extracellular-facing. A helical transmembrane segment spans residues 98 to 123 (PLCLFWLSMDYVASTASIFSVFILCI). Cys-100 and Cys-180 are disulfide-bonded. 2 residues coordinate histamine: Asp-107 and Thr-112. Residues 107–112 (DYVAST) form an important for agonist binding region. Topologically, residues 124 to 144 (DRYRSVQQPLRYLKYRTKTRA) are cytoplasmic. 2 positions are modified to phosphothreonine: Thr-140 and Thr-142. The chain crosses the membrane as a helical span at residues 145 to 164 (SATILGAWFLSFLWVIPILG). Residues 165 to 188 (WNHFMQQTSVRREDKCETDFYDVT) lie on the Extracellular side of the membrane. A helical membrane pass occupies residues 189–211 (WFKVMTAIINFYLPTLLMLWFYA). Asn-198 contacts histamine. The Cytoplasmic segment spans residues 212–416 (KIYKAVRQHC…MNRERKAAKQ (205 aa)). Ser-230 is subject to Phosphoserine. The span at 238–261 (KLRPENPKGDAKKPGKESPWEVLK) shows a compositional bias: basic and acidic residues. The tract at residues 238–291 (KLRPENPKGDAKKPGKESPWEVLKRKPKDAGGGSVLKSPSQTPKEMKSPVVFSQ) is disordered. Residue Thr-279 is modified to Phosphothreonine. Phosphoserine occurs at positions 344 and 347. The disordered stretch occupies residues 345-379 (EISEDQMLGDSQSFSRTDSDTTTETAPGKGKLRSG). Residues 353 to 369 (GDSQSFSRTDSDTTTET) show a composition bias toward polar residues. 3 positions are modified to phosphoserine: Ser-380, Ser-396, and Ser-398. The helical transmembrane segment at 417–440 (LGFIMAAFILCWIPYFIFFMVIAF) threads the bilayer. The interval 424-428 (FILCW) is important for agonist binding. Tyr-431 is a binding site for histamine. The cysteines at positions 441 and 444 are disulfide-linked. The Extracellular segment spans residues 441–446 (CKNCCN). Residues 447-469 (EHLHMFTIWLGYINSTLNPLIYP) traverse the membrane as a helical segment. Over 470 to 487 (LCNENFKKTFKRILHIRS) the chain is Cytoplasmic.

It belongs to the G-protein coupled receptor 1 family. Phosphorylation at sites in the second and third cytoplasmic loops independently contribute to agonist-induced receptor down-regulation.

It localises to the cell membrane. G-protein-coupled receptor for histamine, a biogenic amine that functions as an immune modulator and a neurotransmitter. Through the H1 receptor, histamine mediates the contraction of smooth muscles and increases capillary permeability due to contraction of terminal venules. Also mediates neurotransmission in the central nervous system and thereby regulates circadian rhythms, emotional and locomotor activities as well as cognitive functions. This chain is Histamine H1 receptor, found in Homo sapiens (Human).